A 310-amino-acid chain; its full sequence is Glycerol-3-phosphate dehydrogenase [NAD(P)+] (310 aa).

Residues W19, R39, R40, and K87 each contribute to the NADPH site. Sn-glycerol 3-phosphate-binding residues include K87 and G115. Position 119 (S119) interacts with NADPH. Sn-glycerol 3-phosphate is bound by residues K170, D223, S233, R234, and N235. K170 acts as the Proton acceptor in catalysis. Residue R234 participates in NADPH binding. Position 260 (E260) interacts with NADPH.

The protein belongs to the NAD-dependent glycerol-3-phosphate dehydrogenase family.

The protein localises to the cytoplasm. It catalyses the reaction sn-glycerol 3-phosphate + NAD(+) = dihydroxyacetone phosphate + NADH + H(+). The catalysed reaction is sn-glycerol 3-phosphate + NADP(+) = dihydroxyacetone phosphate + NADPH + H(+). It functions in the pathway membrane lipid metabolism; glycerophospholipid metabolism. In terms of biological role, catalyzes the reduction of the glycolytic intermediate dihydroxyacetone phosphate (DHAP) to sn-glycerol 3-phosphate (G3P), the key precursor for phospholipid synthesis. This is Glycerol-3-phosphate dehydrogenase [NAD(P)+] from Synechococcus sp. (strain JA-3-3Ab) (Cyanobacteria bacterium Yellowstone A-Prime).